The chain runs to 533 residues: MKLLAVRRLLRIQRVVIRYRLDDLILELPMLPWWLRLLGATLPWRWLPRRKLELTRGARLRLALQDLGPIFIKFGQILSTRRDLLPDDIANELAWLQDKVPPFPPELAVKRIEEQLGAKIEQVFARFEREPLASASVAQVHAARLKSGEEVVVKVIRPNLEPVIRSDIAWLFILARLAERVSSEARRLHPVEVVSDYEKTIVDELDLLREAANASQLRRNFEGSPLLYVPQVYWDWCRPKVLVMERIYGIPVTDLETLRDQRTDFKALAERGVEIFFTQVFRDSFFHADMHPGNIFVSTRAPWSPQYIAVDCGIVGSLTDEDQDYLARNLIAFFKRDYRKVAQLHIDSGWVPAETKVNDFEAAIRTVCEPIFEKPLKDISFGQVLLRLFQTARRFNMEIQPQLVLLQKTLLNIEGLGRQLYPELDLWATAQPFLERWMRERVSPKQLLRNFQQQVEQVPHLSQMARDTLERLSQPHAHNAPPPEWKGSRHDWLGRLVGAVLLVGAAEVGLGQQLEAWPAWVMLAGGVFLILRR.

A helical membrane pass occupies residues 24-44 (LILELPMLPWWLRLLGATLPW). In terms of domain architecture, Protein kinase spans 126–494 (RFEREPLASA…WKGSRHDWLG (369 aa)). Residues 132–140 (LASASVAQV) and K154 each bind ATP. Catalysis depends on D289, which acts as the Proton acceptor. Residues 510-530 (LGQQLEAWPAWVMLAGGVFLI) traverse the membrane as a helical segment.

The protein belongs to the ABC1 family. UbiB subfamily.

The protein localises to the cell inner membrane. It participates in cofactor biosynthesis; ubiquinone biosynthesis [regulation]. Its function is as follows. Is probably a protein kinase regulator of UbiI activity which is involved in aerobic coenzyme Q (ubiquinone) biosynthesis. In Pseudomonas aeruginosa (strain ATCC 15692 / DSM 22644 / CIP 104116 / JCM 14847 / LMG 12228 / 1C / PRS 101 / PAO1), this protein is Probable protein kinase UbiB.